The sequence spans 501 residues: G protein-activated inward rectifier potassium channel 1 (501 aa).

Residues 1-40 (MSALRRKFGDDYQVVTTSSSGSGLQPQGPGQDPQQQLVPK) form a disordered region. Residues 1–80 (MSALRRKFGD…LFTTLVDLKW (80 aa)) are Cytoplasmic-facing. Low complexity predominate over residues 18-38 (SSSGSGLQPQGPGQDPQQQLV). The chain crosses the membrane as a helical span at residues 81 to 105 (RWNLFIFILTYTVAWLFMASMWWVI). The Extracellular segment spans residues 106-129 (AYTRGDLNKAHVGNYTPCVANVYN). Residue N119 is glycosylated (N-linked (GlcNAc...) asparagine). The helical; Pore-forming intramembrane region spans 130–141 (FPSAFLFFIETE). Positions 142–148 (ATIGYGY) form an intramembrane region, pore-forming. The Selectivity filter signature appears at 143–148 (TIGYGY). Residues 149-157 (RYITDKCPE) are Extracellular-facing. A helical transmembrane segment spans residues 158-179 (GIILFLFQSILGSIVDAFLIGC). Residues 180-501 (MFIKMSQPKK…LRKMNSDRFT (322 aa)) lie on the Cytoplasmic side of the membrane. The tract at residues 182–209 (IKMSQPKKRAETLMFSEHAVISMRDGKL) is polyphosphoinositide (PIP2)-binding. 2 positions are modified to phosphoserine: S385 and S424.

Belongs to the inward rectifier-type potassium channel (TC 1.A.2.1) family. KCNJ3 subfamily. Associates with KCNJ5/GIRK4 or KCNJ6/GIRK2 to form a G-protein activated heteromultimer pore-forming unit. The resulting inward current is much larger. Associates with KCNJ9/GIRK3 to form a G-protein activated heteromultimer pore-forming unit.

Its subcellular location is the membrane. It catalyses the reaction K(+)(in) = K(+)(out). Heteromultimer composed of KCNJ3/GIRK1 and KCNJ5/GIRK4 is activated by phosphatidylinositol 4,5 biphosphate (PtdIns(4,5)P2). Inward rectifier potassium channels are characterized by a greater tendency to allow potassium to flow into the cell rather than out of it. Their voltage dependence is regulated by the concentration of extracellular potassium; as external potassium is raised, the voltage range of the channel opening shifts to more positive voltages. The inward rectification is mainly due to the blockage of outward current by internal magnesium. This potassium channel is controlled by G proteins. This receptor plays a crucial role in regulating the heartbeat. The chain is G protein-activated inward rectifier potassium channel 1 (KCNJ3) from Homo sapiens (Human).